Reading from the N-terminus, the 493-residue chain is MGSSQLSTLLFFTIVVTFLTVVSSGRDLPGDYLRLPSETSRFFREPKNDDDFEGTRWAILLAGSNGYWNYRHQSDVCHAYQLLRKGGSKEENIIVFMYDDIASNEENPRPGVIINKPDGDDVYAGVPKDYTGAEVHADNFYAALLGNKSALTGGSGKVVDSGPNDHIFVYYTDHGGPGVLGMPVGPYLYASDLNEVLKKKHASGTYKSLVFYLEACESGSIFEGLLPDDLNIYATTASNAEESSWGYYCPGDKPPPPPEYSTCLGDLYSIAWMEDSEVHNLQTESLQQQYKLVKNRTISEPYGSHVMEYGDIGLSKNDLYQYLGTNPANDNNSFVDETENSLKLRTPSAAVNQRDADLIHFWEKFRKAPEGSSQKNEAEKQVLEAMSHRKHIDNSVKLIGQLLFGIEKGTELLDVVRPAGSPLVDNWDCLKTMVKTFETHCGSLSQYGMKHMRSFANICNAGIPNEPMAEASAQACASIPANPWSSLQGGFSA.

Residues 1-19 (MGSSQLSTLLFFTIVVTFL) form the signal peptide. A glycan (N-linked (GlcNAc...) asparagine) is linked at Asn-147. His-174 is an active-site residue. Cys-216 (nucleophile) is an active-site residue. Cys-249 and Cys-263 form a disulfide bridge. N-linked (GlcNAc...) asparagine glycosylation is found at Asn-295 and Asn-331. Intrachain disulfides connect Cys-429/Cys-459 and Cys-441/Cys-476.

Belongs to the peptidase C13 family.

Functionally, asparagine-specific endopeptidase involved in the processing of vacuolar seed protein precursors into the mature forms. This is Vacuolar-processing enzyme from Vicia sativa (Spring vetch).